Reading from the N-terminus, the 168-residue chain is Chemoreceptor glutamine deamidase CheD (168 aa).

Belongs to the CheD family. Forms a complex with CheC.

It carries out the reaction L-glutaminyl-[protein] + H2O = L-glutamyl-[protein] + NH4(+). Deamidates glutamine residues to glutamate on methyl-accepting chemotaxis receptors (MCPs). CheD-mediated MCP deamidation is required for productive communication of the conformational signals of the chemoreceptors to the CheA kinase. The protein is Chemoreceptor glutamine deamidase CheD of Bacillus licheniformis (strain ATCC 14580 / DSM 13 / JCM 2505 / CCUG 7422 / NBRC 12200 / NCIMB 9375 / NCTC 10341 / NRRL NRS-1264 / Gibson 46).